An 84-amino-acid chain; its full sequence is U21-theraphotoxin-Cg1a 3 (84 aa).

An N-terminal signal peptide occupies residues 1–21 (MKVSVLITLAVLGVMFLLTSA). Residues 22–47 (EERGSDQMDSPAWLKSMERIFQSEER) constitute a propeptide that is removed on maturation. Disulfide bonds link Cys49–Cys63, Cys56–Cys68, and Cys62–Cys76. Position 82 is a valine amide (Val82).

Belongs to the neurotoxin 10 (Hwtx-1) family. 05 (F4a) subfamily. As to expression, expressed by the venom gland.

It is found in the secreted. In terms of biological role, probable ion channel inhibitor. The chain is U21-theraphotoxin-Cg1a 3 from Chilobrachys guangxiensis (Chinese earth tiger tarantula).